Reading from the N-terminus, the 68-residue chain is MPQLNTTVWPTMIAPMLLTLFLITQLKVLNTNYHLPPLPKTMKMKNFCKPWEPKWTKIYSLHSLPPQS.

A helical transmembrane segment spans residues 8–24 (VWPTMIAPMLLTLFLIT). Lysine 54 carries the N6-acetyllysine; alternate modification. Lysine 54 bears the N6-succinyllysine; alternate mark. At lysine 57 the chain carries N6-acetyllysine.

The protein belongs to the ATPase protein 8 family. Component of the ATP synthase complex composed at least of ATP5F1A/subunit alpha, ATP5F1B/subunit beta, ATP5MC1/subunit c (homooctomer), MT-ATP6/subunit a, MT-ATP8/subunit 8, ATP5ME/subunit e, ATP5MF/subunit f, ATP5MG/subunit g, ATP5MK/subunit k, ATP5MJ/subunit j, ATP5F1C/subunit gamma, ATP5F1D/subunit delta, ATP5F1E/subunit epsilon, ATP5PF/subunit F6, ATP5PB/subunit b, ATP5PD/subunit d, ATP5PO/subunit OSCP. ATP synthase complex consists of a soluble F(1) head domain (subunits alpha(3) and beta(3)) - the catalytic core - and a membrane F(0) domain - the membrane proton channel (subunits c, a, 8, e, f, g, k and j). These two domains are linked by a central stalk (subunits gamma, delta, and epsilon) rotating inside the F1 region and a stationary peripheral stalk (subunits F6, b, d, and OSCP). Interacts with PRICKLE3.

It localises to the mitochondrion membrane. Subunit 8, of the mitochondrial membrane ATP synthase complex (F(1)F(0) ATP synthase or Complex V) that produces ATP from ADP in the presence of a proton gradient across the membrane which is generated by electron transport complexes of the respiratory chain. ATP synthase complex consist of a soluble F(1) head domain - the catalytic core - and a membrane F(1) domain - the membrane proton channel. These two domains are linked by a central stalk rotating inside the F(1) region and a stationary peripheral stalk. During catalysis, ATP synthesis in the catalytic domain of F(1) is coupled via a rotary mechanism of the central stalk subunits to proton translocation. In vivo, can only synthesize ATP although its ATP hydrolase activity can be activated artificially in vitro. Part of the complex F(0) domain. This chain is ATP synthase F(0) complex subunit 8, found in Gorilla gorilla gorilla (Western lowland gorilla).